Consider the following 234-residue polypeptide: MLTYETWKENSVSFSEEDETKGALSVLSWAYNEYKDEIVYACSFGVEGMVLLHLINQVNPSAKVVFLDTNVHFQETYELIKKVRERFPSLNIIEKQPELTLDEQAKLHGEKLWESNPNLCCSIRKILPLEKSLAAEKAWISGLRREQSETRKHTQFINQDRRFQSIKVCPLIHWTWKEVWRYVYKHSLPYNPLHDVGYPSIGCEKCTLPVGDGGNSRDGRWAGKMKTECGLHFQ.

The [4Fe-4S] cluster site is built by cysteine 120, cysteine 121, cysteine 203, and cysteine 206. Residue cysteine 229 is the Nucleophile; cysteine thiosulfonate intermediate of the active site.

This sequence belongs to the PAPS reductase family. CysH subfamily. The cofactor is [4Fe-4S] cluster.

It localises to the cytoplasm. It catalyses the reaction [thioredoxin]-disulfide + sulfite + AMP + 2 H(+) = adenosine 5'-phosphosulfate + [thioredoxin]-dithiol. Its pathway is sulfur metabolism; hydrogen sulfide biosynthesis; sulfite from sulfate. In terms of biological role, catalyzes the formation of sulfite from adenosine 5'-phosphosulfate (APS) using thioredoxin as an electron donor. This chain is Adenosine 5'-phosphosulfate reductase, found in Bacillus mycoides (strain KBAB4) (Bacillus weihenstephanensis).